Reading from the N-terminus, the 934-residue chain is Serine/threonine-protein kinase PknD (934 aa).

One can recognise a Protein kinase domain in the interval 4-296; it reads YELIRLIGKG…ELRQALQPYL (293 aa). ATP contacts are provided by residues 10–18 and lysine 33; that span reads IGKGGMGEV. Aspartate 138 serves as the catalytic Proton acceptor.

The protein belongs to the protein kinase superfamily. Ser/Thr protein kinase family. Post-translationally, autophosphorylated on serine and threonine residues.

The catalysed reaction is L-seryl-[protein] + ATP = O-phospho-L-seryl-[protein] + ADP + H(+). It catalyses the reaction L-threonyl-[protein] + ATP = O-phospho-L-threonyl-[protein] + ADP + H(+). In terms of biological role, together with the serine/threonine kinase Pkn1, may play a role in the specific interactions with host proteins during intracellular growth. The chain is Serine/threonine-protein kinase PknD from Chlamydia trachomatis serovar A (strain ATCC VR-571B / DSM 19440 / HAR-13).